We begin with the raw amino-acid sequence, 321 residues long: MKFVATLIACGLSGLALAAPTATVDSLEKRGPNDAAFGYASLNGGTTGGAGGTTTTVSSYAAFTAAVSSDAKKVVYVSGPIKQSAKQVKVGSNTSIIGKDSTAVLEGFGLLVKEKSNVIIRNLGVKKVLAENGDAIGIQYSNNVWVDHVDVSSDRDHDKDYYDGLIDLTHAADYVTISNCYIHDHWKASLVGHSDNNGDEDTGHLRVTYANNYWSNINSRAPSLRFGTGHVYNSYFENVSDGINTRDGAQVLVESNQFVGSSKALYSTDAGYAVEKDNDFGGAKNTALKGTLTTVPYSYSLVGSSKVKSAVVGQAGQTLKF.

A signal peptide spans 1-18; sequence MKFVATLIACGLSGLALA. Asparagine 93 is a glycosylation site (N-linked (GlcNAc...) asparagine). Residues aspartate 134, aspartate 163, and aspartate 167 each coordinate Ca(2+). The active site involves arginine 220. A glycan (N-linked (GlcNAc...) asparagine) is linked at asparagine 238.

This sequence belongs to the polysaccharide lyase 1 family. Requires Ca(2+) as cofactor.

The protein resides in the secreted. It carries out the reaction Eliminative cleavage of (1-&gt;4)-alpha-D-galacturonan to give oligosaccharides with 4-deoxy-alpha-D-galact-4-enuronosyl groups at their non-reducing ends.. Functionally, pectinolytic enzyme consist of four classes of enzymes: pectin lyase, polygalacturonase, pectin methylesterase and rhamnogalacturonase. Among pectinolytic enzymes, pectin lyase is the most important in depolymerization of pectin, since it cleaves internal glycosidic bonds of highly methylated pectins. Favors pectate, the anion, over pectin, the methyl ester. The protein is Probable pectate lyase A (plyA) of Neosartorya fischeri (strain ATCC 1020 / DSM 3700 / CBS 544.65 / FGSC A1164 / JCM 1740 / NRRL 181 / WB 181) (Aspergillus fischerianus).